The following is a 492-amino-acid chain: N-succinylglutamate 5-semialdehyde dehydrogenase (492 aa).

220-225 provides a ligand contact to NAD(+); sequence GSASTG. Catalysis depends on residues glutamate 243 and cysteine 277.

This sequence belongs to the aldehyde dehydrogenase family. AstD subfamily.

It catalyses the reaction N-succinyl-L-glutamate 5-semialdehyde + NAD(+) + H2O = N-succinyl-L-glutamate + NADH + 2 H(+). It functions in the pathway amino-acid degradation; L-arginine degradation via AST pathway; L-glutamate and succinate from L-arginine: step 4/5. Its function is as follows. Catalyzes the NAD-dependent reduction of succinylglutamate semialdehyde into succinylglutamate. The polypeptide is N-succinylglutamate 5-semialdehyde dehydrogenase (Salmonella paratyphi A (strain AKU_12601)).